A 217-amino-acid polypeptide reads, in one-letter code: Non-structural protein NS3 (217 aa).

The protein belongs to the orbivirus NS3 family.

Its function is as follows. May play a role in the release of virions from infected cells. This is Non-structural protein NS3 (Segment-10) from African horse sickness virus 9 (AHSV-9).